Here is a 428-residue protein sequence, read N- to C-terminus: Enolase (428 aa).

Gln163 contacts (2R)-2-phosphoglycerate. Catalysis depends on Glu205, which acts as the Proton donor. Asp242, Glu286, and Asp313 together coordinate Mg(2+). Residues Lys338, Arg367, Ser368, and Lys389 each contribute to the (2R)-2-phosphoglycerate site. Lys338 serves as the catalytic Proton acceptor.

Belongs to the enolase family. Mg(2+) serves as cofactor.

Its subcellular location is the cytoplasm. It localises to the secreted. It is found in the cell surface. It carries out the reaction (2R)-2-phosphoglycerate = phosphoenolpyruvate + H2O. It participates in carbohydrate degradation; glycolysis; pyruvate from D-glyceraldehyde 3-phosphate: step 4/5. Catalyzes the reversible conversion of 2-phosphoglycerate (2-PG) into phosphoenolpyruvate (PEP). It is essential for the degradation of carbohydrates via glycolysis. The polypeptide is Enolase (Geobacter sulfurreducens (strain ATCC 51573 / DSM 12127 / PCA)).